A 245-amino-acid polypeptide reads, in one-letter code: DNA repair protein RecO (245 aa).

This sequence belongs to the RecO family.

Involved in DNA repair and RecF pathway recombination. This is DNA repair protein RecO from Klebsiella pneumoniae (strain 342).